The following is a 446-amino-acid chain: Eukaryotic translation initiation factor 2 subunit gamma (446 aa).

The 207-residue stretch at 21-227 (QATINIGTIG…YIVKKIPIPV (207 aa)) folds into the tr-type G domain. The segment at 30–37 (GHVAHGKS) is G1. 33–38 (AHGKST) contacts GTP. A G2 region spans residues 58-62 (NITIK). Positions 114–117 (DCPG) are G3. GTP-binding positions include 170–173 (NKVD) and 205–207 (SAQ). A G4 region spans residues 170–173 (NKVD). Positions 205 to 207 (SAQ) are G5. The tract at residues 436 to 446 (AKVVEGKTLKV) is interacts with cdc123.

This sequence belongs to the TRAFAC class translation factor GTPase superfamily. Classic translation factor GTPase family. EIF2G subfamily. In terms of assembly, eukaryotic translation initiation factor 2 eIF2 is a heterotrimeric complex composed of an alpha, a beta and a gamma subunit. The factors eIF-1, eIF-2, eIF-3, TIF5/eIF-5 and methionyl-tRNAi form a multifactor complex (MFC) that may bind to the 40S ribosome. Interacts with cdc123; the interaction is direct.

The protein resides in the cytoplasm. The protein localises to the cytosol. It catalyses the reaction GTP + H2O = GDP + phosphate + H(+). As a subunit of eukaryotic initiation factor 2 eIF2, involved in the early steps of protein synthesis. In the presence of GTP, eIF-2 forms a ternary complex with initiator tRNA Met-tRNAi and then recruits the 40S ribosomal complex and initiation factors eIF-1, eIF-1A and eIF-3 to form the 43S pre-initiation complex (43S PIC), a step that determines the rate of protein translation. The 43S PIC binds to mRNA and scans downstream to the initiation codon, where it forms a 48S initiation complex by codon-anticodon base pairing. This leads to the displacement of eIF-1 to allow GTPase-activating protein (GAP) eIF-5-mediated hydrolysis of eIF2-bound GTP. Hydrolysis of GTP and release of Pi, which makes GTP hydrolysis irreversible, causes the release of the eIF-2-GDP binary complex from the 40S subunit, an event that is essential for the subsequent joining of the 60S ribosomal subunit to form an elongation-competent 80S ribosome. In order for eIF-2 to recycle and catalyze another round of initiation, the GDP bound to eIF-2 must be exchanged with GTP by way of a reaction catalyzed by GDP-GTP exchange factor (GEF) eIF-2B. In Schizosaccharomyces pombe (strain 972 / ATCC 24843) (Fission yeast), this protein is Eukaryotic translation initiation factor 2 subunit gamma (tif213).